The primary structure comprises 366 residues: Flagellar P-ring protein (366 aa).

The N-terminal stretch at 1–20 (MVIKFLSALILLLVTTAAQA) is a signal peptide.

This sequence belongs to the FlgI family. As to quaternary structure, the basal body constitutes a major portion of the flagellar organelle and consists of four rings (L,P,S, and M) mounted on a central rod.

Its subcellular location is the periplasm. It is found in the bacterial flagellum basal body. In terms of biological role, assembles around the rod to form the L-ring and probably protects the motor/basal body from shearing forces during rotation. This Escherichia coli O1:K1 / APEC protein is Flagellar P-ring protein.